The sequence spans 274 residues: Kit ligand (274 aa).

The N-terminal stretch at 1–25 (MKKTQTWIITCIYLQLLLFNPLVRT) is a signal peptide. Residues 26 to 215 (KGICRNRVTD…ANPLGDSNLQ (190 aa)) are Extracellular-facing. 2 disulfides stabilise this stretch: cysteine 29–cysteine 114 and cysteine 68–cysteine 164. Residues asparagine 90, asparagine 97, asparagine 145, and asparagine 196 are each glycosylated (N-linked (GlcNAc...) asparagine). Residues 216-238 (WAAMALPAFFSLVIGFAFGALYW) form a helical membrane-spanning segment. Over 239 to 274 (KKKQPNLTRTAENIQINEEDNEISMLQEKEREFQEV) the chain is Cytoplasmic.

It belongs to the SCF family. In terms of assembly, homodimer, non-covalently linked. Heterotetramer with KIT, binding two KIT molecules; thereby mediates KIT dimerization and subsequent activation by autophosphorylation. In terms of processing, a soluble form is produced by proteolytic processing of isoform 1 in the extracellular domain.

It localises to the cytoplasm. The protein resides in the cytoskeleton. It is found in the cell membrane. Its subcellular location is the cell projection. The protein localises to the lamellipodium. It localises to the filopodium. The protein resides in the secreted. Its function is as follows. Ligand for the receptor-type protein-tyrosine kinase KIT. Plays an essential role in the regulation of cell survival and proliferation, hematopoiesis, stem cell maintenance, gametogenesis, mast cell development, migration and function, and in melanogenesis. KITLG/SCF binding can activate several signaling pathways. Promotes phosphorylation of PIK3R1, the regulatory subunit of phosphatidylinositol 3-kinase, and subsequent activation of the kinase AKT1. KITLG/SCF and KIT also transmit signals via GRB2 and activation of RAS, RAF1 and the MAP kinases MAPK1/ERK2 and/or MAPK3/ERK1. KITLG/SCF and KIT promote activation of STAT family members STAT1, STAT3 and STAT5. KITLG/SCF and KIT promote activation of PLCG1, leading to the production of the cellular signaling molecules diacylglycerol and inositol 1,4,5-trisphosphate. KITLG/SCF acts synergistically with other cytokines, probably interleukins. This Neovison vison (American mink) protein is Kit ligand (KITLG).